We begin with the raw amino-acid sequence, 441 residues long: Thymidine phosphorylase (441 aa).

It belongs to the thymidine/pyrimidine-nucleoside phosphorylase family. In terms of assembly, homodimer.

The catalysed reaction is thymidine + phosphate = 2-deoxy-alpha-D-ribose 1-phosphate + thymine. Its pathway is pyrimidine metabolism; dTMP biosynthesis via salvage pathway; dTMP from thymine: step 1/2. The enzymes which catalyze the reversible phosphorolysis of pyrimidine nucleosides are involved in the degradation of these compounds and in their utilization as carbon and energy sources, or in the rescue of pyrimidine bases for nucleotide synthesis. The chain is Thymidine phosphorylase from Chromobacterium violaceum (strain ATCC 12472 / DSM 30191 / JCM 1249 / CCUG 213 / NBRC 12614 / NCIMB 9131 / NCTC 9757 / MK).